The chain runs to 591 residues: Aspartate--tRNA ligase (591 aa).

An L-aspartate-binding site is contributed by Glu173. Residues 197–200 (QLFK) are aspartate. Residue Arg219 coordinates L-aspartate. Residues 219 to 221 (RDE) and Gln228 contribute to the ATP site. Residue His448 participates in L-aspartate binding. Glu482 is an ATP binding site. Arg489 is a binding site for L-aspartate. 534 to 537 (GLDR) is an ATP binding site.

The protein belongs to the class-II aminoacyl-tRNA synthetase family. Type 1 subfamily. In terms of assembly, homodimer.

It is found in the cytoplasm. It catalyses the reaction tRNA(Asp) + L-aspartate + ATP = L-aspartyl-tRNA(Asp) + AMP + diphosphate. Catalyzes the attachment of L-aspartate to tRNA(Asp) in a two-step reaction: L-aspartate is first activated by ATP to form Asp-AMP and then transferred to the acceptor end of tRNA(Asp). The chain is Aspartate--tRNA ligase from Shewanella frigidimarina (strain NCIMB 400).